We begin with the raw amino-acid sequence, 225 residues long: Plasma membrane-associated cation-binding protein 1 (225 aa).

A lipid anchor (N-myristoyl glycine) is attached at Gly2. Thr32 carries the post-translational modification Phosphothreonine. At Ser107 the chain carries Phosphoserine. Positions 140-197 (PVEEVKAEEPAKTEEPAKTEGTSGEKEEIVEETKKGETPETAVVEEKKPEVEEKKEEA) are enriched in basic and acidic residues. Positions 140 to 225 (PVEEVKAEEP…TAPVAEPPKP (86 aa)) are disordered. 2 positions are modified to phosphothreonine: Thr152 and Thr177.

This sequence belongs to the DREPP family. Interacts with Turnip mosaic virus (TuMV) P3N-PIPO. Requires Cu(2+) as cofactor. Mostly expressed in the basal region of hypocotyls. Expressed in seedlings, roots, shoots, stems, leaves (e.g. in epidermis and vascular tissues), flowers (e.g. in pistils and anthers) and siliques (at protein level).

Its subcellular location is the cell membrane. The protein resides in the cytoplasm. It is found in the cytoskeleton. It localises to the cell junction. The protein localises to the plasmodesma. In terms of biological role, may be involved in intracellular signaling through interaction with PtdInsPs and calmodulin (CaM); may keep PtdInsPs attached to the plasma membrane until Ca(2+)-CaM reaches a competitive concentration subsequent to an increase triggered by a stimulus, thus leading to PtdInsPs release and subsequent activation of InsPs-dependent signaling cascade. Interacts competitively at the N-terminus with calcium ions and CaM (in a calcium-dependent manner), and with the phosphatidylinositol phosphates PtdIns(3,4,5)P(3), PtdIns(3,4)P(2), PtdIns(4,5)P(2) and PtdIns(3,5)P(2). Also binds weakly to PtdIns(3)P, PtdIns(4)P and PtdIns(5)P. Negative regulator of hypocotyl cell elongation by destabilizing cortical microtubules in a calcium-dependent manner. Binds directly to and destabilized microtubules to enhance microtubule depolymerization when cytoplasmic calcium increases. In case of Turnip mosaic virus (TuMV) infection, confers sensitivity by promoting viral cell-to-cell movement through interaction with viral P3N-PIPO. This is Plasma membrane-associated cation-binding protein 1 (PCAP1) from Arabidopsis thaliana (Mouse-ear cress).